A 62-amino-acid chain; its full sequence is DNA gyrase inhibitor YacG (62 aa).

4 residues coordinate Zn(2+): cysteine 8, cysteine 11, cysteine 27, and cysteine 31.

This sequence belongs to the DNA gyrase inhibitor YacG family. As to quaternary structure, interacts with GyrB. It depends on Zn(2+) as a cofactor.

In terms of biological role, inhibits all the catalytic activities of DNA gyrase by preventing its interaction with DNA. Acts by binding directly to the C-terminal domain of GyrB, which probably disrupts DNA binding by the gyrase. The chain is DNA gyrase inhibitor YacG from Actinobacillus pleuropneumoniae serotype 5b (strain L20).